Consider the following 440-residue polypeptide: Heat stress transcription factor A-4b (440 aa).

Residues 121-181 (NERKDYEEEI…QRSLISYVRE (61 aa)) are a coiled coil. Residues 133 to 183 (LKSDNAALSSELQNNTLKKLNMEKRMQALEEKLFVVEDQQRSLISYVREIV) are hydrophobic repeat HR-A/B. The short motif at 158 to 163 (MQALEE) is the Nuclear export signal element. The Nuclear localization signal signature appears at 200–204 (RKKRR). The tract at residues 264 to 417 (DISYDDGVPG…EMKSGDRQHL (154 aa)) is disordered. Residues 295 to 305 (SPPTRMRTSSA) are compositionally biased toward polar residues. Residues 333 to 343 (SRVDTRAKVSE) show a composition bias toward basic and acidic residues. Residues 375–384 (DGFWQQFLTE) carry the AHA motif. Residues 380-390 (QFLTEQPGSSD) show a composition bias toward polar residues. Residues 391 to 417 (AHQEAQSERRDGGNKVDEMKSGDRQHL) are compositionally biased toward basic and acidic residues.

It belongs to the HSF family. Class A subfamily. Homotrimer. In terms of processing, exhibits temperature-dependent phosphorylation.

Its subcellular location is the cytoplasm. The protein resides in the nucleus. Its function is as follows. Transcriptional regulator that specifically binds DNA of heat shock promoter elements (HSE). The polypeptide is Heat stress transcription factor A-4b (HSFA4B) (Oryza sativa subsp. japonica (Rice)).